Reading from the N-terminus, the 245-residue chain is GATA zinc finger domain-containing protein 1 (245 aa).

The GATA-type zinc-finger motif lies at 9 to 33; it reads CSMCKTNTSSMWKKGSQGEILCNNC. The segment covering 39–70 has biased composition (low complexity); the sequence is TAAGGNNNNNSSSSTSGSSSYTGTTFASTSTS. A disordered region spans residues 39-110; it reads TAAGGNNNNN…PAAEKKVSTK (72 aa). Residues 71–80 are compositionally biased toward polar residues; the sequence is QQSNGGNTKQ.

The protein resides in the nucleus. Its function is as follows. Component of some chromatin complex recruited to chromatin sites methylated 'Lys-4' of histone H3 (H3K4me), with a preference for trimethylated form (H3K4me3). The sequence is that of GATA zinc finger domain-containing protein 1 (gatad1) from Xenopus laevis (African clawed frog).